Reading from the N-terminus, the 217-residue chain is Large ribosomal subunit protein uL1 (217 aa).

Lys-122 carries the post-translational modification N6,N6-dimethyllysine; alternate. Lys-122 is modified (N6-methyllysine; alternate).

This sequence belongs to the universal ribosomal protein uL1 family.

The polypeptide is Large ribosomal subunit protein uL1 (rpl10a) (Dictyostelium discoideum (Social amoeba)).